We begin with the raw amino-acid sequence, 447 residues long: Chromosomal replication initiator protein DnaA (447 aa).

Residues 1–79 (MVSCENLWQQ…TGQEITVKLI (79 aa)) form a domain I, interacts with DnaA modulators region. The domain II stretch occupies residues 79–105 (ITDGLEPHSLIGQESSLPMETTPKNAT). Residues 106 to 322 (ALNGKYTFSR…GALIRAIAYT (217 aa)) form a domain III, AAA+ region region. ATP is bound by residues Gly-150, Gly-152, Lys-153, and Thr-154. The domain IV, binds dsDNA stretch occupies residues 323–447 (SLSNVAMTVE…INIAGQAPES (125 aa)).

It belongs to the DnaA family. In terms of assembly, oligomerizes as a right-handed, spiral filament on DNA at oriC.

It localises to the cytoplasm. Functionally, plays an essential role in the initiation and regulation of chromosomal replication. ATP-DnaA binds to the origin of replication (oriC) to initiate formation of the DNA replication initiation complex once per cell cycle. Binds the DnaA box (a 9 base pair repeat at the origin) and separates the double-stranded (ds)DNA. Forms a right-handed helical filament on oriC DNA; dsDNA binds to the exterior of the filament while single-stranded (ss)DNA is stabiized in the filament's interior. The ATP-DnaA-oriC complex binds and stabilizes one strand of the AT-rich DNA unwinding element (DUE), permitting loading of DNA polymerase. After initiation quickly degrades to an ADP-DnaA complex that is not apt for DNA replication. Binds acidic phospholipids. In terms of biological role, isolated domain IV (residues 348-447) binds both E.coli and B.subtilis oriC. This Synechocystis sp. (strain ATCC 27184 / PCC 6803 / Kazusa) protein is Chromosomal replication initiator protein DnaA.